A 568-amino-acid polypeptide reads, in one-letter code: 2-succinyl-5-enolpyruvyl-6-hydroxy-3-cyclohexene-1-carboxylate synthase (568 aa).

Belongs to the TPP enzyme family. MenD subfamily. As to quaternary structure, homodimer. The cofactor is Mg(2+). Mn(2+) is required as a cofactor. Thiamine diphosphate serves as cofactor.

It catalyses the reaction isochorismate + 2-oxoglutarate + H(+) = 5-enolpyruvoyl-6-hydroxy-2-succinyl-cyclohex-3-ene-1-carboxylate + CO2. The protein operates within quinol/quinone metabolism; 1,4-dihydroxy-2-naphthoate biosynthesis; 1,4-dihydroxy-2-naphthoate from chorismate: step 2/7. It functions in the pathway quinol/quinone metabolism; menaquinone biosynthesis. Its function is as follows. Catalyzes the thiamine diphosphate-dependent decarboxylation of 2-oxoglutarate and the subsequent addition of the resulting succinic semialdehyde-thiamine pyrophosphate anion to isochorismate to yield 2-succinyl-5-enolpyruvyl-6-hydroxy-3-cyclohexene-1-carboxylate (SEPHCHC). In Histophilus somni (strain 2336) (Haemophilus somnus), this protein is 2-succinyl-5-enolpyruvyl-6-hydroxy-3-cyclohexene-1-carboxylate synthase.